Reading from the N-terminus, the 215-residue chain is Peptide methionine sulfoxide reductase MsrA (215 aa).

Residue cysteine 58 is part of the active site.

The protein belongs to the MsrA Met sulfoxide reductase family.

The enzyme catalyses L-methionyl-[protein] + [thioredoxin]-disulfide + H2O = L-methionyl-(S)-S-oxide-[protein] + [thioredoxin]-dithiol. It catalyses the reaction [thioredoxin]-disulfide + L-methionine + H2O = L-methionine (S)-S-oxide + [thioredoxin]-dithiol. Has an important function as a repair enzyme for proteins that have been inactivated by oxidation. Catalyzes the reversible oxidation-reduction of methionine sulfoxide in proteins to methionine. This Pseudomonas syringae pv. tomato (strain ATCC BAA-871 / DC3000) protein is Peptide methionine sulfoxide reductase MsrA.